A 163-amino-acid chain; its full sequence is Norbelladine synthase (163 aa).

68–71 (YHKE) serves as a coordination point for tyramine. The active-site Proton donor is Lys-83.

Belongs to the BetVI family. In terms of tissue distribution, mostly expressed in bulbs, and, to a lower extent, in roots, stems, leaves and flowers.

It carries out the reaction 3,4-dihydroxybenzaldehyde + tyramine + AH2 = norbelladine + A + H2O. The protein operates within alkaloid biosynthesis. Catalyzes the condensation of tyramine and 3,4-dihydroxybenzaldehyde (3,4-DHBA) to form norbelladine, the common precursor to all Amaryllidaceae alkaloids such as galanthamine, lycorine and haemanthamine, and including haemanthamine- and crinamine-type alkaloids, promising anticancer agents. This chain is Norbelladine synthase, found in Narcissus pseudonarcissus (Daffodil).